The primary structure comprises 455 residues: UDP-glycosyltransferase 79B2 (455 aa).

UDP-alpha-D-glucose contacts are provided by residues Ser-266, 325–327, 342–350, and 364–367; these read VQQ, HCGFGSMWE, and LGDQ.

This sequence belongs to the UDP-glycosyltransferase family.

This Arabidopsis thaliana (Mouse-ear cress) protein is UDP-glycosyltransferase 79B2 (UGT79B2).